The primary structure comprises 644 residues: Core protein VP4 (644 aa).

This sequence belongs to the orbivirus VP4 family.

Its subcellular location is the virion. In terms of biological role, the VP4 protein is one of the five proteins (with VP1, VP3, VP6 and VP7) which form the inner capsid of the virus. The chain is Core protein VP4 (Segment-4) from Antilocapra americana (Pronghorn).